Reading from the N-terminus, the 251-residue chain is uncharacterized protein (251 aa).

The a divalent metal cation site is built by His5, His7, Glu101, His132, His163, and Asp209.

Belongs to the metallo-dependent hydrolases superfamily. TatD-type hydrolase family. A divalent metal cation serves as cofactor.

This is an uncharacterized protein from Methanocaldococcus jannaschii (strain ATCC 43067 / DSM 2661 / JAL-1 / JCM 10045 / NBRC 100440) (Methanococcus jannaschii).